The following is a 517-amino-acid chain: Crotonobetaine/carnitine--CoA ligase (517 aa).

This sequence belongs to the ATP-dependent AMP-binding enzyme family.

It carries out the reaction 4-(trimethylamino)butanoate + ATP + CoA = 4-(trimethylamino)butanoyl-CoA + AMP + diphosphate. The catalysed reaction is crotonobetaine + ATP + CoA = crotonobetainyl-CoA + AMP + diphosphate. The enzyme catalyses (R)-carnitine + ATP + CoA = (R)-carnitinyl-CoA + AMP + diphosphate. The protein operates within amine and polyamine metabolism; carnitine metabolism. Catalyzes the transfer of CoA to carnitine, generating the initial carnitinyl-CoA needed for the CaiB reaction cycle. Also has activity toward crotonobetaine and gamma-butyrobetaine. The sequence is that of Crotonobetaine/carnitine--CoA ligase from Escherichia coli O6:K15:H31 (strain 536 / UPEC).